A 180-amino-acid chain; its full sequence is ATP synthase subunit delta (180 aa).

It belongs to the ATPase delta chain family. F-type ATPases have 2 components, F(1) - the catalytic core - and F(0) - the membrane proton channel. F(1) has five subunits: alpha(3), beta(3), gamma(1), delta(1), epsilon(1). CF(0) has four main subunits: a(1), b(1), b'(1) and c(10-14). The alpha and beta chains form an alternating ring which encloses part of the gamma chain. F(1) is attached to F(0) by a central stalk formed by the gamma and epsilon chains, while a peripheral stalk is formed by the delta, b and b' chains.

It localises to the cellular thylakoid membrane. In terms of biological role, f(1)F(0) ATP synthase produces ATP from ADP in the presence of a proton or sodium gradient. F-type ATPases consist of two structural domains, F(1) containing the extramembraneous catalytic core and F(0) containing the membrane proton channel, linked together by a central stalk and a peripheral stalk. During catalysis, ATP synthesis in the catalytic domain of F(1) is coupled via a rotary mechanism of the central stalk subunits to proton translocation. Functionally, this protein is part of the stalk that links CF(0) to CF(1). It either transmits conformational changes from CF(0) to CF(1) or is implicated in proton conduction. This chain is ATP synthase subunit delta, found in Synechococcus elongatus (strain ATCC 33912 / PCC 7942 / FACHB-805) (Anacystis nidulans R2).